Consider the following 224-residue polypeptide: UPF0758 protein IL0240 (224 aa).

Residues 102–224 (GFTEPTMVKD…PISFAERGLL (123 aa)) enclose the MPN domain. Zn(2+)-binding residues include H173, H175, and D186. Residues 173-186 (HNHPSGVAEPSQAD) carry the JAMM motif motif.

Belongs to the UPF0758 family.

The protein is UPF0758 protein IL0240 of Idiomarina loihiensis (strain ATCC BAA-735 / DSM 15497 / L2-TR).